The sequence spans 199 residues: Probable GTP-binding protein EngB (199 aa).

Residues 21–195 (IYTEIAFLGR…EQKIILESLG (175 aa)) enclose the EngB-type G domain. GTP-binding positions include 29–36 (GRSNVGKS), 56–60 (GKTQL), 81–84 (DLPG), 151–154 (TKAD), and 174–176 (VSN). Mg(2+)-binding residues include Ser-36 and Thr-58.

This sequence belongs to the TRAFAC class TrmE-Era-EngA-EngB-Septin-like GTPase superfamily. EngB GTPase family. It depends on Mg(2+) as a cofactor.

Functionally, necessary for normal cell division and for the maintenance of normal septation. In Campylobacter lari (strain RM2100 / D67 / ATCC BAA-1060), this protein is Probable GTP-binding protein EngB.